We begin with the raw amino-acid sequence, 119 residues long: Anamorsin homolog (119 aa).

Residues 33 to 119 form a disordered region; that stretch reads LKQATKGEDC…KVKLNLTDDI (87 aa). The [2Fe-2S] cluster site is built by Cys-42, Cys-49, Cys-52, and Cys-54. Positions 42 to 54 are fe-S binding site A; it reads CTTRRRACKNCVC. Residues Cys-81, Cys-84, Cys-92, and Cys-95 each coordinate [4Fe-4S] cluster. 2 short sequence motifs (cx2C motif) span residues 81-84 and 92-95; these read CGNC and CANC. Positions 81–95 are fe-S binding site B; it reads CGNCAKGDAFRCANC.

This sequence belongs to the anamorsin family. Monomer. [2Fe-2S] cluster serves as cofactor. Requires [4Fe-4S] cluster as cofactor.

It is found in the cytoplasm. The protein localises to the mitochondrion intermembrane space. Component of the cytosolic iron-sulfur (Fe-S) protein assembly (CIA) machinery. Required for the maturation of extramitochondrial Fe-S proteins. Part of an electron transfer chain functioning in an early step of cytosolic Fe-S biogenesis, facilitating the de novo assembly of a [4Fe-4S] cluster on the cytosolic Fe-S scaffold complex. Electrons are transferred from NADPH via a FAD- and FMN-containing diflavin oxidoreductase. Together with the diflavin oxidoreductase, also required for the assembly of the diferric tyrosyl radical cofactor of ribonucleotide reductase (RNR), probably by providing electrons for reduction during radical cofactor maturation in the catalytic small subunit. This Leishmania braziliensis protein is Anamorsin homolog.